A 284-amino-acid chain; its full sequence is ATP synthase gamma chain (284 aa).

It belongs to the ATPase gamma chain family. F-type ATPases have 2 components, CF(1) - the catalytic core - and CF(0) - the membrane proton channel. CF(1) has five subunits: alpha(3), beta(3), gamma(1), delta(1), epsilon(1). CF(0) has three main subunits: a, b and c.

The protein resides in the cell membrane. In terms of biological role, produces ATP from ADP in the presence of a proton gradient across the membrane. The gamma chain is believed to be important in regulating ATPase activity and the flow of protons through the CF(0) complex. The chain is ATP synthase gamma chain from Pelotomaculum thermopropionicum (strain DSM 13744 / JCM 10971 / SI).